A 976-amino-acid chain; its full sequence is MVSKYHRLLQQGLREEEEGVTERNMVAGGEQRHGHVDDDNAEGDADFYDQKDERRAKMWNPKHESANVSAGGKQNRSVRDCLPGSLPPVANTSTDAAVRFDRERKNAGHGVDISCVEGDGAQMGTYVSTGRSDAKAGGGSSAIGVTADDESDGNLDTDGSDASEGDEVESTTDADVYGEDDTTEGPRGGVRLYSCDACPHAVFTTHAALLAHAEEHHADLLPDHARLRRIAQKLNPVWNRALNARRNTITSWGKKIFHVAAQRDAGESKMQEAHRARAQLECVVRRWHDKARVFIFGSSVAMGVWDGTADIDFAVVDVDAMERGSWPPLEKNAVRSITELLRRVGFSFVNLEPISHARVPIIKHHASSPILTVARRDAEDVVARSIRFILNGPATREDRLLLEGSVRDAVGPTGVQQVWWNRTSDMMSATLESTTAAVRAAMCSPALASASLRTKVQPAHDECRPELYNIDFDLSFRAFGIRNSTLLRKYLLSHPCARPGAIVLKDWSKTSGVNNSVNGYFTSYAINIMWIYYLVQKGYVPYVDPLEIPESLVNYTDFDPRYTPMIDPEITNTEREELYKAAGDMLVGFFYFYSFEFDWGHNVISLNRPGITTKRMLGWHVEDVVPVASTSVSSGGGGSNVKRHPTRYELCIEDPYEENLNLGRHIGVTKSLRVRTELYRGLLSLLKEGETRSCVFAAADSSGTPAAGGKQSAALPARALFKLMALTTQAISESRRLPQSNSDNSGRIANGDNESLTEVGGGHRVEGAGVDPASCAGASLSSFGEPPIGVHEKTLESIFVEKAPMEFQLVRKVWNWHQLIHRLGYKIHRGHVMPRREVGVRCTARRDAEETTTELASGVDTTKSLRPGRGLTDTMLRDLSRGYMTLTPEWVAWSAPWVSQHLRGYSRLTTVRSAVADETPPALATVPSVVKPPTGEAVMGAMRTTRRNAAPARRVELLKLWLWRGISKVTPFKSPR.

Disordered stretches follow at residues 1 to 47 and 129 to 185; these read MVSK…DADF and TGRS…TTEG. Positions 1 to 188 are required for oligomerization and may contribute to the incorporation into the MPsome complex; the sequence is MVSKYHRLLQ…EDDTTEGPRG (188 aa). Acidic residues predominate over residues 147-183; that stretch reads ADDESDGNLDTDGSDASEGDEVESTTDADVYGEDDTT. Residues 190–221 form a C2H2-type; atypical zinc finger; sequence VRLYSCDACPHAVFTTHAALLAHAEEHHADLL. Zn(2+)-binding residues include Cys-195, Cys-198, His-212, and His-217. Residues Ser-298 and 309-312 contribute to the UTP site; that span reads ADID. 2 residues coordinate Mg(2+): Asp-310 and Asp-312. An RNA-binding site is contributed by Arg-358. Positions 366–425 constitute a PAP-associated domain; that stretch reads ASSPILTVARRDAEDVVARSIRFILNGPATREDRLLLEGSVRDAVGPTGVQQVWWNRTSD. Residues 480-484, Lys-505, Lys-509, and 523-524 each bind UTP; these read GIRNS and SY. A Nucleotide recognition motif (NRM) motif is present at residues 652–661; sequence IEDPYEENLN. An important for catalytic activity and RNA binding region spans residues 700 to 976; that stretch reads DSSGTPAAGG…SKVTPFKSPR (277 aa). The disordered stretch occupies residues 732–755; the sequence is SESRRLPQSNSDNSGRIANGDNES.

This sequence belongs to the DNA polymerase type-B-like family. Oligomer. Component of the mitochondrial 3' processome (MPsome) complex composed at least of terminal uridylyltransferase KRET1/TUT1, 3'-5' exonuclease DSS1, MPSS1, MPSS2 and MPSS3. Within the complex, interacts with DSS1, MPSS1 and MPSS3. Mg(2+) is required as a cofactor. It depends on Mn(2+) as a cofactor.

The protein localises to the mitochondrion. It catalyses the reaction RNA(n) + UTP = RNA(n)-3'-uridine ribonucleotide + diphosphate. In terms of biological role, terminal uridylyltransferase which is involved in the post-transcriptional editing of mitochondrial RNA, a process involving the addition and deletion of uridine (U) nucleotides in the pre-RNA. Specifically, catalyzes the addition of Us to the 3'-hydroxyl group of guided RNA (gRNA), ribosomal RNA (rRNA) and some mRNAs. As part of the mitochondrial 3' processome (MPsome), catalyzes the primary 3' uridylation of gRNA precursors to facilitate their recognition and to induce their processive 3'-5' degradation by DSS1, and the secondary 3' uridylation of mature gRNAs. Involved in the 3' uridylylation of the long A/U tail of some edited and never-edited mRNAs. Promotes 3' uridylylation-mediated decay of some never-edited mRNAs. Does not mediate RNA-independent UTP polymerization. The chain is Terminal uridylyltransferase 1 from Trypanosoma brucei brucei.